The following is a 427-amino-acid chain: UDP-N-acetylglucosamine 1-carboxyvinyltransferase 1 (427 aa).

A phosphoenolpyruvate-binding site is contributed by 23 to 24 (KN). Arginine 96 lines the UDP-N-acetyl-alpha-D-glucosamine pocket. Cysteine 120 acts as the Proton donor in catalysis. Position 120 is a 2-(S-cysteinyl)pyruvic acid O-phosphothioketal (cysteine 120). Residues 125–129 (RPIDL), aspartate 309, and valine 331 contribute to the UDP-N-acetyl-alpha-D-glucosamine site.

Belongs to the EPSP synthase family. MurA subfamily.

It is found in the cytoplasm. It catalyses the reaction phosphoenolpyruvate + UDP-N-acetyl-alpha-D-glucosamine = UDP-N-acetyl-3-O-(1-carboxyvinyl)-alpha-D-glucosamine + phosphate. The protein operates within cell wall biogenesis; peptidoglycan biosynthesis. In terms of biological role, cell wall formation. Adds enolpyruvyl to UDP-N-acetylglucosamine. The chain is UDP-N-acetylglucosamine 1-carboxyvinyltransferase 1 from Streptococcus pneumoniae serotype 4 (strain ATCC BAA-334 / TIGR4).